Here is a 1066-residue protein sequence, read N- to C-terminus: Carbamoyl phosphate synthase large chain (1066 aa).

The tract at residues 1 to 401 (MPKNNNIKKV…ALMKAVRSLE (401 aa)) is carboxyphosphate synthetic domain. ATP-binding residues include Arg-129, Arg-169, Gly-175, Gly-176, Arg-208, Ile-210, Glu-215, Gly-241, Val-242, His-243, Gln-284, and Glu-298. An ATP-grasp 1 domain is found at 133–327 (KNTMEKIGEP…IAKVAAKIAL (195 aa)). Mg(2+) is bound by residues Gln-284, Glu-298, and Asn-300. Residues Gln-284, Glu-298, and Asn-300 each contribute to the Mn(2+) site. The oligomerization domain stretch occupies residues 402 to 547 (QNIYSMNYGD…YSCFDSENEV (146 aa)). The carbamoyl phosphate synthetic domain stretch occupies residues 548–931 (DATKTKKKVL…ALYKAFLGAG (384 aa)). The ATP-grasp 2 domain maps to 673–863 (DEILEKCCIP…IVSLASKAVL (191 aa)). Positions 709, 748, 750, 754, 779, 780, 781, 782, 822, and 834 each coordinate ATP. The Mg(2+) site is built by Gln-822, Glu-834, and Asn-836. Residues Gln-822, Glu-834, and Asn-836 each coordinate Mn(2+). Residues 932–1066 (INLPKHKKMI…ELSLIDIARI (135 aa)) form the MGS-like domain. Residues 932-1066 (INLPKHKKMI…ELSLIDIARI (135 aa)) form an allosteric domain region.

This sequence belongs to the CarB family. As to quaternary structure, composed of two chains; the small (or glutamine) chain promotes the hydrolysis of glutamine to ammonia, which is used by the large (or ammonia) chain to synthesize carbamoyl phosphate. Tetramer of heterodimers (alpha,beta)4. It depends on Mg(2+) as a cofactor. The cofactor is Mn(2+).

The enzyme catalyses hydrogencarbonate + L-glutamine + 2 ATP + H2O = carbamoyl phosphate + L-glutamate + 2 ADP + phosphate + 2 H(+). It catalyses the reaction hydrogencarbonate + NH4(+) + 2 ATP = carbamoyl phosphate + 2 ADP + phosphate + 2 H(+). It functions in the pathway amino-acid biosynthesis; L-arginine biosynthesis; carbamoyl phosphate from bicarbonate: step 1/1. Its pathway is pyrimidine metabolism; UMP biosynthesis via de novo pathway; (S)-dihydroorotate from bicarbonate: step 1/3. In terms of biological role, large subunit of the glutamine-dependent carbamoyl phosphate synthetase (CPSase). CPSase catalyzes the formation of carbamoyl phosphate from the ammonia moiety of glutamine, carbonate, and phosphate donated by ATP, constituting the first step of 2 biosynthetic pathways, one leading to arginine and/or urea and the other to pyrimidine nucleotides. The large subunit (synthetase) binds the substrates ammonia (free or transferred from glutamine from the small subunit), hydrogencarbonate and ATP and carries out an ATP-coupled ligase reaction, activating hydrogencarbonate by forming carboxy phosphate which reacts with ammonia to form carbamoyl phosphate. The chain is Carbamoyl phosphate synthase large chain from Lachnoclostridium phytofermentans (strain ATCC 700394 / DSM 18823 / ISDg) (Clostridium phytofermentans).